A 196-amino-acid chain; its full sequence is MAGNKKTNRREEILQALAQMLESTQGSQRITTAKLAAQVGVSEAALYRHFPSKARMFEGLIEFIEDSISTRINRILDDEKDTMNRLRMVLQLILVFAERNPGLTRIMTGHALMFEQDRLQSRINQLFERIETQLRQVLRERKLREGKGFPVDESVLAAQLLGQVEGSLNRYVRSNFKYKPTENFDHYWQLLSAQLG.

Positions 7-68 constitute an HTH tetR-type domain; it reads TNRREEILQA…GLIEFIEDSI (62 aa). The segment at residues 31–50 is a DNA-binding region (H-T-H motif); sequence TTAKLAAQVGVSEAALYRHF. Residues 115–142 are a coiled coil; sequence EQDRLQSRINQLFERIETQLRQVLRERK.

This sequence belongs to the nucleoid occlusion factor SlmA family. In terms of assembly, homodimer. Interacts with FtsZ.

It is found in the cytoplasm. It localises to the nucleoid. Required for nucleoid occlusion (NO) phenomenon, which prevents Z-ring formation and cell division over the nucleoid. Acts as a DNA-associated cell division inhibitor that binds simultaneously chromosomal DNA and FtsZ, and disrupts the assembly of FtsZ polymers. SlmA-DNA-binding sequences (SBS) are dispersed on non-Ter regions of the chromosome, preventing FtsZ polymerization at these regions. This is Nucleoid occlusion factor SlmA from Photobacterium profundum (strain SS9).